A 521-amino-acid polypeptide reads, in one-letter code: Medium/long-chain-fatty-acid--[acyl-carrier-protein] ligase MbtM (521 aa).

It belongs to the ATP-dependent AMP-binding enzyme family.

The enzyme catalyses a long-chain fatty acid + holo-[ACP] + ATP = a long-chain fatty acyl-[ACP] + AMP + diphosphate. The catalysed reaction is a medium-chain fatty acid + holo-[ACP] + ATP = a medium-chain fatty acyl-[ACP] + AMP + diphosphate. It participates in siderophore biosynthesis; mycobactin biosynthesis. Functionally, activates lipidic moieties required for mycobactin biosynthesis. Converts medium- to long-chain aliphatic fatty acids into acyl adenylate, which is further transferred on to the phosphopantetheine arm of the carrier protein MbtL. This Mycobacterium bovis (strain ATCC BAA-935 / AF2122/97) protein is Medium/long-chain-fatty-acid--[acyl-carrier-protein] ligase MbtM (mbtM).